The primary structure comprises 148 residues: Putative HTH-type transcriptional regulator NMA1593 (148 aa).

The HTH rrf2-type domain occupies 2–131 (RLTTKGRFAV…GSVTLQSIIE (130 aa)).

The protein is Putative HTH-type transcriptional regulator NMA1593 of Neisseria meningitidis serogroup A / serotype 4A (strain DSM 15465 / Z2491).